Consider the following 62-residue polypeptide: Ponericin-W-like 32.2 (62 aa).

The signal sequence occupies residues methionine 1–alanine 23. A propeptide spanning residues arginine 49–proline 62 is cleaved from the precursor.

Belongs to the non-disulfide-bridged peptide (NDBP) superfamily. Medium-length antimicrobial peptide (group 3) family. Ponericin-W subfamily. As to expression, expressed by the venom gland.

Its subcellular location is the secreted. The protein resides in the target cell membrane. Its function is as follows. Antimicrobial peptide with potent activity against a range of Gram-positive and Gram-negative bacteria. Has high hemolytic activity against erythrocytes. May act by disrupting the integrity of the bacterial cell membrane. This chain is Ponericin-W-like 32.2, found in Lychas mucronatus (Chinese swimming scorpion).